We begin with the raw amino-acid sequence, 261 residues long: 5'-nucleotidase SurE (261 aa).

A divalent metal cation-binding residues include Asp-8, Asp-9, Ser-40, and Asn-94.

It belongs to the SurE nucleotidase family. It depends on a divalent metal cation as a cofactor.

The protein localises to the cytoplasm. The enzyme catalyses a ribonucleoside 5'-phosphate + H2O = a ribonucleoside + phosphate. Its function is as follows. Nucleotidase that shows phosphatase activity on nucleoside 5'-monophosphates. The polypeptide is 5'-nucleotidase SurE (Anaplasma marginale (strain St. Maries)).